A 1873-amino-acid chain; its full sequence is Voltage-dependent L-type calcium channel subunit alpha-1S (1873 aa).

Residues 1 to 23 are disordered; the sequence is MEPSSPQDEGLRKKQPKKPLPEV. Residues 1 to 51 lie on the Cytoplasmic side of the membrane; that stretch reads MEPSSPQDEGLRKKQPKKPLPEVLPRPPRALFCLTLQNPLRKACISIVEWK. One copy of the I repeat lies at 38–337; sequence NPLRKACISI…LVLGVLSGEF (300 aa). The helical transmembrane segment at 52 to 70 threads the bilayer; that stretch reads PFETIILLTIFANCVALAV. Residues 71–85 are Extracellular-facing; sequence YLPMPEDDNNSLNLG. Asparagine 79 carries N-linked (GlcNAc...) asparagine glycosylation. A helical membrane pass occupies residues 86–106; sequence LEKLEYFFLTVFSIEAAMKII. The Cytoplasmic portion of the chain corresponds to 107 to 115; sequence AYGFLFHQD. A helical transmembrane segment spans residues 116–136; the sequence is AYLRSGWNVLDFIIVFLGVFT. Residues 137–160 are Extracellular-facing; it reads AILEQVNVIQSNTAPMSSKGAGLD. Residues 161–179 traverse the membrane as a helical segment; the sequence is VKALRAFRVLRPLRLVSGV. The Cytoplasmic portion of the chain corresponds to 180 to 196; that stretch reads PSLQVVLNSIFKAMLPL. The helical transmembrane segment at 197-218 threads the bilayer; sequence FHIALLVLFMVIIYAIIGLELF. The Extracellular portion of the chain corresponds to 219-279; that stretch reads KGKMHKTCYY…HGITHFDNFG (61 aa). Disulfide bonds link cysteine 226/cysteine 254 and cysteine 245/cysteine 261. The N-linked (GlcNAc...) asparagine glycan is linked to asparagine 257. The segment at residues 280 to 301 is an intramembrane region (pore-forming); that stretch reads FSMLTVYQCITMEGWTDVLYWV. Residues 290–293 carry the Selectivity filter of repeat I motif; the sequence is TMEG. Residue glutamate 292 participates in Ca(2+) binding. At 302 to 309 the chain is on the extracellular side; that stretch reads NDAIGNEW. A helical membrane pass occupies residues 310–330; that stretch reads PWIYFVTLILLGSFFILNLVL. The Cytoplasmic segment spans residues 331–432; it reads GVLSGEFTKE…WKCHDLVKSR (102 aa). The interval 357-374 is binding to the beta subunit; sequence QQLEEDLRGYMSWITQGE. Serine 393 and serine 397 each carry phosphoserine. The stretch at 418-664 is one II repeat; it reads NRVFRWKCHD…VFLAIAVDNL (247 aa). Residues 433-451 traverse the membrane as a helical segment; sequence VFYWLVILIVALNTLSIAS. At 452–462 the chain is on the extracellular side; it reads EHHNQPLWLTH. A helical transmembrane segment spans residues 463–483; sequence LQDIANRVLLSLFTIEMLLKM. Over 484–494 the chain is Cytoplasmic; it reads YGLGLRQYFMS. Residues 495 to 514 form a helical membrane-spanning segment; that stretch reads IFNRFDCFVVCSGILELLLV. The Extracellular segment spans residues 515-523; it reads ESGAMTPLG. A helical membrane pass occupies residues 524–542; that stretch reads ISVLRCIRLLRLFKITKYW. Topologically, residues 543–561 are cytoplasmic; sequence TSLSNLVASLLNSIRSIAS. A helical transmembrane segment spans residues 562 to 581; it reads LLLLLFLFIIIFALLGMQLF. The Extracellular portion of the chain corresponds to 582 to 601; sequence GGRYDFEDTEVRRSNFDNFP. The segment at residues 602–623 is an intramembrane region (pore-forming); it reads QALISVFQVLTGEDWNSVMYNG. A Selectivity filter of repeat II motif is present at residues 612 to 615; that stretch reads TGED. Residue glutamate 614 coordinates Ca(2+). Over 624-633 the chain is Extracellular; sequence IMAYGGPSYP. The chain crosses the membrane as a helical span at residues 634-653; it reads GVLVCIYFIILFVCGNYILL. Residues 654-799 are Cytoplasmic-facing; that stretch reads NVFLAIAVDN…VLCHRIVNAT (146 aa). Disordered stretches follow at residues 673-717 and 731-757; these read AQKA…IPTT and EVKDPYPSADFPGDDEEDEPEIPVSPR. Residue serine 687 is modified to Phosphoserine; by PKA. A compositionally biased stretch (basic and acidic residues) spans 690 to 711; sequence LPDKTEEEKSVMAKKLEQKPKG. Over residues 742 to 751 the composition is skewed to acidic residues; it reads PGDDEEDEPE. The interaction with STAC, STAC2 and STAC3 (via SH3 domains) stretch occupies residues 747-760; it reads EDEPEIPVSPRPRP. The stretch at 786–1068 is one III repeat; it reads NKVRVLCHRI…IFVGFVIVTF (283 aa). Residues 800-818 form a helical membrane-spanning segment; sequence WFTNFILLFILLSSAALAA. Topologically, residues 819-830 are extracellular; it reads EDPIRAESVRNQ. The helical transmembrane segment at 831 to 850 threads the bilayer; the sequence is ILGYFDIAFTSVFTVEIVLK. Residues 851–866 lie on the Cytoplasmic side of the membrane; sequence MTTYGAFLHKGSFCRN. The helical transmembrane segment at 867–885 threads the bilayer; that stretch reads YFNILDLLVVAVSLISMGL. Topologically, residues 886–892 are extracellular; that stretch reads ESSTISV. A helical membrane pass occupies residues 893–911; sequence VKILRVLRVLRPLRAINRA. The Cytoplasmic segment spans residues 912 to 930; it reads KGLKHVVQCVFVAIRTIGN. The helical transmembrane segment at 931–950 threads the bilayer; sequence IVLVTTLLQFMFACIGVQLF. The Extracellular segment spans residues 951–1000; sequence KGKFFSCNDLSKMTEEECRGYYYVYKDGDPTQMELRPRQWIHNDFHFDNV. Cysteine 957 and cysteine 968 form a disulfide bridge. A dihydropyridine binding region spans residues 988–1077; it reads RQWIHNDFHF…FQEQGETEYK (90 aa). The pore-forming intramembrane region spans 1001 to 1021; it reads LSAMMSLFTVSTFEGWPQLLY. Positions 1012–1015 match the Selectivity filter of repeat III motif; that stretch reads TFEG. Position 1014 (glutamate 1014) interacts with Ca(2+). Residues 1022–1038 are Extracellular-facing; sequence RAIDSNEEDMGPVYNNR. A helical transmembrane segment spans residues 1039–1060; the sequence is VEMAIFFIIYIILIAFFMMNIF. At 1061–1118 the chain is on the cytoplasmic side; that stretch reads VGFVIVTFQEQGETEYKNCELDKNQRQCVQYALKARPLRCYIPKNPYQYQVWYVVTSS. An IV repeat occupies 1105-1384; sequence NPYQYQVWYV…LFVAVIMDNF (280 aa). Residues 1119–1140 traverse the membrane as a helical segment; it reads YFEYLMFALIMLNTICLGMQHY. The Extracellular portion of the chain corresponds to 1141 to 1148; sequence HQSEEMNH. A helical transmembrane segment spans residues 1149-1170; that stretch reads ISDILNVAFTIIFTLEMILKLL. At 1171 to 1180 the chain is on the cytoplasmic side; the sequence is AFKARGYFGD. Residues 1181–1200 form a helical membrane-spanning segment; the sequence is PWNVFDFLIVIGSIIDVILS. At 1201 to 1231 the chain is on the extracellular side; that stretch reads EIDTFLASSGGLYCLGGGCGNVDPDESARIS. A helical membrane pass occupies residues 1232-1250; it reads SAFFRLFRVMRLIKLLSRA. Residues 1251–1268 lie on the Cytoplasmic side of the membrane; it reads EGVRTLLWTFIKSFQALP. Residues 1269–1289 form a helical membrane-spanning segment; sequence YVALLIVMLFFIYAVIGMQMF. Residues 1290-1311 are Extracellular-facing; sequence GKIALVDGTQINRNNNFQTFPQ. Residues 1312–1330 constitute an intramembrane region (pore-forming); it reads AVLLLFRCATGEAWQEILL. The Selectivity filter of repeat IV motif lies at 1321-1324; the sequence is TGEA. The Extracellular portion of the chain corresponds to 1331–1356; it reads ACSYGKLCDPESDYAPGEEYTCGTNF. Residues 1337–1403 form a dihydropyridine binding region; that stretch reads LCDPESDYAP…LGPHHLDEFK (67 aa). The cysteines at positions 1338 and 1352 are disulfide-linked. The interval 1349-1391 is phenylalkylamine binding; it reads EYTCGTNFAYYYFISFYMLCAFLIINLFVAVIMDNFDYLTRDW. The helical transmembrane segment at 1357–1381 threads the bilayer; it reads AYYYFISFYMLCAFLIINLFVAVIM. Residues 1382-1873 lie on the Cytoplasmic side of the membrane; it reads DNFDYLTRDW…SQETLIPPRP (492 aa). Residues 1522–1542 form an interaction with calmodulin region; sequence KFYATFLIQEHFRKFMKRQEE. Position 1575 is a phosphoserine; by PKA and CAMK2 (serine 1575). The residue at position 1579 (threonine 1579) is a Phosphothreonine; by CK2. Position 1617 is a phosphoserine; by PKA (serine 1617). Disordered regions lie at residues 1689–1782 and 1841–1873; these read EFPG…RPAP and GMASVPGSLSRRSSLGSLDQVQGSQETLIPPRP. Low complexity predominate over residues 1847-1858; the sequence is GSLSRRSSLGSL.

The protein belongs to the calcium channel alpha-1 subunit (TC 1.A.1.11) family. CACNA1S subfamily. In terms of assembly, component of a calcium channel complex consisting of a pore-forming alpha subunit (CACNA1S) and the ancillary subunits CACNB1 or CACNB2, CACNG1 and CACNA2D1. The channel complex contains alpha, beta, gamma and delta subunits in a 1:1:1:1 ratio, i.e. it contains either CACNB1 or CACNB2. CACNA1S channel activity is modulated by the auxiliary subunits (CACNB1 or CACNB2, CACNG1 and CACNA2D1). Interacts with DYSF and JSRP1. Interacts with RYR1. Interacts with STAC, STAC2 and STAC3 (via their SH3 domains). Interaction with STAC3 promotes expression at the cell membrane. Interaction with STAC2 promotes expression at the cell membrane, but with much lower efficiency than STAC3. Interaction with STAC1 leads to very low levels expression at the cell membrane, much less than the levels observed upon interaction with STAC3 and STAC2. Interacts with CALM. Post-translationally, the alpha-1S subunit is found in two isoforms in the skeletal muscle: a minor form of 212 kDa containing the complete amino acid sequence, and a major form of 190 kDa derived from the full-length form by post-translational proteolysis close to Phe-1690. Phosphorylated. Phosphorylation by PKA activates the calcium channel. Both the minor and major forms are phosphorylated in vitro by PKA. Phosphorylation at Ser-1575 is involved in beta-adrenergic-mediated regulation of the channel. In terms of tissue distribution, detected in skeletal muscle T-tubules (at protein level).

It is found in the cell membrane. The protein localises to the sarcolemma. The protein resides in the T-tubule. It catalyses the reaction Ca(2+)(in) = Ca(2+)(out). Channel activity is blocked by dihydropyridines (DHP), phenylalkylamines, and by benzothiazepines. Its function is as follows. Pore-forming, alpha-1S subunit of the voltage-gated calcium channel that gives rise to L-type calcium currents in skeletal muscle. Calcium channels containing the alpha-1S subunit play an important role in excitation-contraction coupling in skeletal muscle via their interaction with RYR1, which triggers Ca(2+) release from the sarcplasmic reticulum and ultimately results in muscle contraction. Long-lasting (L-type) calcium channels belong to the 'high-voltage activated' (HVA) group. This is Voltage-dependent L-type calcium channel subunit alpha-1S (CACNA1S) from Oryctolagus cuniculus (Rabbit).